The sequence spans 225 residues: Ferric nitrobindin-like protein (225 aa).

The GXWXGXG motif lies at 78–84 (GVWRGTG).

It belongs to the nitrobindin family.

This is Ferric nitrobindin-like protein from Corynebacterium diphtheriae (strain ATCC 700971 / NCTC 13129 / Biotype gravis).